The primary structure comprises 201 residues: Adenylyl-sulfate kinase (201 aa).

35 to 42 (GLSGSGKS) serves as a coordination point for ATP. Ser-109 serves as the catalytic Phosphoserine intermediate.

The protein belongs to the APS kinase family.

It carries out the reaction adenosine 5'-phosphosulfate + ATP = 3'-phosphoadenylyl sulfate + ADP + H(+). The protein operates within sulfur metabolism; hydrogen sulfide biosynthesis; sulfite from sulfate: step 2/3. Its function is as follows. Catalyzes the synthesis of activated sulfate. This is Adenylyl-sulfate kinase from Enterobacter sp. (strain 638).